The following is a 174-amino-acid chain: Crossover junction endodeoxyribonuclease RuvC (174 aa).

Active-site residues include aspartate 8, glutamate 67, and aspartate 139. Mg(2+) contacts are provided by aspartate 8, glutamate 67, and aspartate 139.

This sequence belongs to the RuvC family. Homodimer which binds Holliday junction (HJ) DNA. The HJ becomes 2-fold symmetrical on binding to RuvC with unstacked arms; it has a different conformation from HJ DNA in complex with RuvA. In the full resolvosome a probable DNA-RuvA(4)-RuvB(12)-RuvC(2) complex forms which resolves the HJ. Requires Mg(2+) as cofactor.

It is found in the cytoplasm. The enzyme catalyses Endonucleolytic cleavage at a junction such as a reciprocal single-stranded crossover between two homologous DNA duplexes (Holliday junction).. The RuvA-RuvB-RuvC complex processes Holliday junction (HJ) DNA during genetic recombination and DNA repair. Endonuclease that resolves HJ intermediates. Cleaves cruciform DNA by making single-stranded nicks across the HJ at symmetrical positions within the homologous arms, yielding a 5'-phosphate and a 3'-hydroxyl group; requires a central core of homology in the junction. The consensus cleavage sequence is 5'-(A/T)TT(C/G)-3'. Cleavage occurs on the 3'-side of the TT dinucleotide at the point of strand exchange. HJ branch migration catalyzed by RuvA-RuvB allows RuvC to scan DNA until it finds its consensus sequence, where it cleaves and resolves the cruciform DNA. This is Crossover junction endodeoxyribonuclease RuvC from Pseudomonas aeruginosa (strain LESB58).